The chain runs to 291 residues: MVNSQVADKEKLDAQTNNQDSVATIVTTENNKKYTIPDSEKKIVYSTQNLDLWYGENHALQNINLDILENNVTAIIGPSGCGKSTYIKALNRMVELVPSVKTAGKILYRDQNIFDAKYSKEKLRTNVGMVFQQPNPFPKSIYDNITYGPKTHGIKNKKILDEIVEKSLRGAAIWDELKDRLHTNAYGLSGGQQQRVCIARCLAIEPDVILMDEPTSALDPISTLRVEELVQELKENYSIIMVTHNMQQAARVSDKTAFFLNGYVNEYDDTDKIFSNPADKQTEDYISGRFG.

In terms of domain architecture, ABC transporter spans 45 to 286 (YSTQNLDLWY…PADKQTEDYI (242 aa)). 77–84 (GPSGCGKS) contacts ATP.

It belongs to the ABC transporter superfamily. Phosphate importer (TC 3.A.1.7) family. As to quaternary structure, the complex is composed of two ATP-binding proteins (PstB), two transmembrane proteins (PstC and PstA) and a solute-binding protein (PstS).

Its subcellular location is the cell membrane. It carries out the reaction phosphate(out) + ATP + H2O = ADP + 2 phosphate(in) + H(+). Part of the ABC transporter complex PstSACB involved in phosphate import. Responsible for energy coupling to the transport system. The protein is Phosphate import ATP-binding protein PstB of Staphylococcus epidermidis (strain ATCC 35984 / DSM 28319 / BCRC 17069 / CCUG 31568 / BM 3577 / RP62A).